Here is a 169-residue protein sequence, read N- to C-terminus: Cyclic pyranopterin monophosphate synthase (169 aa).

Residues 83–85 and 121–122 each bind substrate; these read LCH and ME. Aspartate 136 is a catalytic residue.

It belongs to the MoaC family. In terms of assembly, homohexamer; trimer of dimers.

It carries out the reaction (8S)-3',8-cyclo-7,8-dihydroguanosine 5'-triphosphate = cyclic pyranopterin phosphate + diphosphate. It functions in the pathway cofactor biosynthesis; molybdopterin biosynthesis. Functionally, catalyzes the conversion of (8S)-3',8-cyclo-7,8-dihydroguanosine 5'-triphosphate to cyclic pyranopterin monophosphate (cPMP). The sequence is that of Cyclic pyranopterin monophosphate synthase from Rhodospirillum centenum (strain ATCC 51521 / SW).